Consider the following 592-residue polypeptide: A-type ATP synthase subunit A (592 aa).

234–241 (GPFGSGKT) is a binding site for ATP.

Belongs to the ATPase alpha/beta chains family. In terms of assembly, has multiple subunits with at least A(3), B(3), C, D, E, F, H, I and proteolipid K(x).

The protein localises to the cell membrane. The catalysed reaction is ATP + H2O + 4 H(+)(in) = ADP + phosphate + 5 H(+)(out). In terms of biological role, produces ATP from ADP in the presence of a proton gradient across the membrane. The archaeal alpha chain is a catalytic subunit. Component of the A-type ATP synthase that produces ATP from ADP in the presence of a proton gradient across the membrane. The A chain is the catalytic subunit. In Sulfolobus acidocaldarius (strain ATCC 33909 / DSM 639 / JCM 8929 / NBRC 15157 / NCIMB 11770), this protein is A-type ATP synthase subunit A.